The sequence spans 294 residues: Serine/threonine-protein kinase Aurora-1 (294 aa).

One can recognise a Protein kinase domain in the interval 31–282 (FDIGKPLGRG…LHKLLEHPWI (252 aa)). Residues 37–45 (LGRGKFGHV) and Lys60 each bind ATP. Residue Asp154 is the Proton acceptor of the active site. Ser176 is subject to Phosphoserine. Residue Thr185 is modified to Phosphothreonine.

This sequence belongs to the protein kinase superfamily. Ser/Thr protein kinase family. Aurora subfamily. In terms of assembly, interacts with TPX2. Post-translationally, phosphorylation at Thr-185 may regulate activity and degradation of AUR1 in a cell cycle dependent manner. In terms of tissue distribution, abundant in roots, flowers and flower buds, low or absent in expanded leaves, stems and siliques.

Its subcellular location is the nucleus membrane. The protein localises to the cytoplasm. It localises to the cytoskeleton. It is found in the spindle. The protein resides in the spindle pole. Its subcellular location is the phragmoplast. The catalysed reaction is L-seryl-[protein] + ATP = O-phospho-L-seryl-[protein] + ADP + H(+). It catalyses the reaction L-threonyl-[protein] + ATP = O-phospho-L-threonyl-[protein] + ADP + H(+). Functionally, phosphorylates specifically 'Ser-10' of histone H3 in vitro and colocalizes with phosphorylated histone H3 during mitosis. Associates with cytoskeletal structures that are necessary for cytokinesis and with the microtubule spindle. Also colocalizes with gamma-tubulin and function in microtubule organizing centers (MTOCs). In contrast with the mammalian B-type Aurora, AUR1 has no kinase activity toward 'Ser-28' of histone H3. This chain is Serine/threonine-protein kinase Aurora-1 (AUR1), found in Arabidopsis thaliana (Mouse-ear cress).